A 3579-amino-acid chain; its full sequence is Protocadherin-like wing polarity protein stan (3579 aa).

Positions 1–29 are cleaved as a signal peptide; the sequence is MQTREFPQRPLGLLLVLLVVLLQSSLIKS. At 30-2816 the chain is on the extracellular side; it reads YLIIVHEDTP…EPSLLVQITS (2787 aa). 3 N-linked (GlcNAc...) asparagine glycosylation sites follow: asparagine 46, asparagine 179, and asparagine 340. 8 consecutive Cadherin domains span residues 360–464, 465–581, 582–689, 690–794, 795–897, 898–1007, 1008–1113, and 1114–1220; these read EQAL…SPTF, EAEQ…YPQF, SERT…APRF, YTSQ…DPAF, NPKY…APIF, ENAP…APAF, KSPL…PPTF, and ASDK…APVL. Asparagine 671 is a glycosylation site (N-linked (GlcNAc...) asparagine). A glycan (N-linked (GlcNAc...) asparagine) is linked at asparagine 886. N-linked (GlcNAc...) asparagine glycans are attached at residues asparagine 1269, asparagine 1374, and asparagine 1441. One can recognise an EGF-like 1; calcium-binding domain in the interval 1482-1518; that stretch reads EVDLCYSDPCQNGGTCVRREGGYTCVCPSTHTGQNCE. Intrachain disulfides connect cysteine 1486–cysteine 1497, cysteine 1491–cysteine 1506, and cysteine 1508–cysteine 1517. The region spanning 1556–1753 is the Laminin G-like 1 domain; sequence LRARAFGRNS…VADNGTLAGC (198 aa). 3 N-linked (GlcNAc...) asparagine glycosylation sites follow: asparagine 1650, asparagine 1678, and asparagine 1747. 4 disulfides stabilise this stretch: cysteine 1727–cysteine 1753, cysteine 1760–cysteine 1771, cysteine 1765–cysteine 1780, and cysteine 1782–cysteine 1791. In terms of domain architecture, EGF-like 2; calcium-binding spans 1756-1792; it reads KAPLCQSEPCFNGGTCREGWGTYSCECPEGYAGNSCQ. The region spanning 1796 to 1963 is the Laminin G-like 2 domain; sequence PAPWRFSGDG…TIRENVEDGC (168 aa). An N-linked (GlcNAc...) asparagine glycan is attached at asparagine 1843. Intrachain disulfides connect cysteine 1937–cysteine 1963, cysteine 1969–cysteine 1979, cysteine 1973–cysteine 1988, and cysteine 1990–cysteine 1999. In terms of domain architecture, EGF-like 3; calcium-binding spans 1965 to 2000; it reads SRAQCPDHCPNHSSCQSSWDLSTCECDSGYVGTDCA. Asparagine 1975 carries an N-linked (GlcNAc...) asparagine glycan. Asparagine 2016, asparagine 2028, asparagine 2071, and asparagine 2088 each carry an N-linked (GlcNAc...) asparagine glycan. 4 disulfide bridges follow: cysteine 2092–cysteine 2095, cysteine 2097–cysteine 2114, cysteine 2116–cysteine 2125, and cysteine 2128–cysteine 2140. The Laminin EGF-like domain maps to 2095-2142; the sequence is CDCYSIGSFSGACNPLTGQCECREGVIGRRCDSCSNPYAEVTLSGCEV. 2 N-linked (GlcNAc...) asparagine glycosylation sites follow: asparagine 2196 and asparagine 2320. Residues 2553-2562 are compositionally biased toward basic and acidic residues; that stretch reads QETQRLEIPS. Disordered regions lie at residues 2553–2582, 2610–2635, and 2654–2684; these read QETQ…STEQ, HEIP…EREP, and VISP…GENE. Positions 2567-2579 are enriched in low complexity; it reads SSSSPSSSSSSGS. The GAIN-B domain maps to 2653 to 2803; that stretch reads EVISPDSPEM…AVIVDVIDPE (151 aa). 2 disulfides stabilise this stretch: cysteine 2747-cysteine 2785 and cysteine 2762-cysteine 2787. Positions 2747-2803 are GPS; the sequence is CVRWNSFTNQWTRLGCQTEIPDFDGDFNPAAQQAILVNCSCTHISSYAVIVDVIDPE. An N-linked (GlcNAc...) asparagine glycan is attached at asparagine 2784. A helical transmembrane segment spans residues 2817–2837; the sequence is YSAFLVSLPLLLGVLLALALL. Over 2838–2845 the chain is Cytoplasmic; it reads RGQQTNSN. Residues 2846 to 2866 traverse the membrane as a helical segment; that stretch reads TIHQNIVLCVFCAELLFFVGM. Residues 2867–2883 lie on the Extracellular side of the membrane; the sequence is QSRRQLLESEFPCKLTA. Residues 2884–2904 traverse the membrane as a helical segment; the sequence is ICLHYFWLAAFAWTTVDCVHL. The Cytoplasmic portion of the chain corresponds to 2905 to 2919; sequence YRMLTEMRDINHGPM. A helical membrane pass occupies residues 2920–2940; that stretch reads GFYFAMGYGAPAIVVGLSVGV. The Extracellular portion of the chain corresponds to 2941–2959; the sequence is RAHEYGNSLFCWLSVYEPV. The chain crosses the membrane as a helical span at residues 2960–2980; sequence VWWLVGPIAGMSVVNLLILFV. The Cytoplasmic portion of the chain corresponds to 2981–3000; the sequence is SVKAAFTLKDHVLGFGNLRT. The chain crosses the membrane as a helical span at residues 3001-3021; sequence LLWLSVVSLPLMGVMWVLAVL. Residues 3022 to 3031 lie on the Extracellular side of the membrane; sequence AASEHSQLLS. A helical membrane pass occupies residues 3032–3052; it reads LLLSGVVLLHALFCLIGYCII. Over 3053-3579 the chain is Cytoplasmic; that stretch reads NKRVRENLQR…RNIDDDETTV (527 aa). Disordered regions lie at residues 3111–3225, 3343–3377, 3458–3486, and 3499–3579; these read GISA…TPAY, LYGR…SGSQ, YHQQ…YHFP, and LSHT…ETTV. Residues 3113–3128 are compositionally biased toward low complexity; that stretch reads SASSTTSRSTAKTSSS. A compositionally biased stretch (basic and acidic residues) spans 3167 to 3191; that stretch reads RGGEEKPSRRQRKDSDSGSETDGRS. 2 positions are modified to phosphoserine: serine 3199 and serine 3200. Residues 3208 to 3223 show a composition bias toward polar residues; that stretch reads ARSSGTHRSTAVSSTP. Over residues 3343-3352 the composition is skewed to basic and acidic residues; sequence LYGRRGEYPD. Over residues 3459 to 3468 the composition is skewed to low complexity; sequence HQQQQQQQQH. Basic and acidic residues predominate over residues 3469–3482; it reads HLQDRLSEGSDKNG. A compositionally biased stretch (polar residues) spans 3501-3513; it reads HTQPPSLHGSQLM.

This sequence belongs to the G-protein coupled receptor 2 family. In terms of assembly, interacts with ATP6AP2 (via N-terminus). In terms of tissue distribution, in the pupal wing, expressed at relatively even levels in all regions. Abundant in 6-9 hours embryos. Expressed at higher levels in pupae than larvae.

It localises to the cell membrane. The protein resides in the apical cell membrane. Its function is as follows. Involved in the fz signaling pathway that controls wing tissue polarity. Also mediates homophilic cell adhesion. May play a role in initiating prehair morphogenesis. May play a critical role in tissue polarity and in formation of normal dendrite fields. During planar cell polarity, stabilizes asymmetric PCP domains together with ATP6AP2. The sequence is that of Protocadherin-like wing polarity protein stan (stan) from Drosophila melanogaster (Fruit fly).